We begin with the raw amino-acid sequence, 137 residues long: Nucleoside diphosphate kinase (137 aa).

6 residues coordinate ATP: lysine 9, phenylalanine 57, arginine 85, threonine 91, arginine 102, and asparagine 112. Histidine 115 serves as the catalytic Pros-phosphohistidine intermediate.

It belongs to the NDK family. As to quaternary structure, homotetramer. Requires Mg(2+) as cofactor.

The protein resides in the cytoplasm. The catalysed reaction is a 2'-deoxyribonucleoside 5'-diphosphate + ATP = a 2'-deoxyribonucleoside 5'-triphosphate + ADP. It carries out the reaction a ribonucleoside 5'-diphosphate + ATP = a ribonucleoside 5'-triphosphate + ADP. Its function is as follows. Major role in the synthesis of nucleoside triphosphates other than ATP. The ATP gamma phosphate is transferred to the NDP beta phosphate via a ping-pong mechanism, using a phosphorylated active-site intermediate. The chain is Nucleoside diphosphate kinase from Nitratiruptor sp. (strain SB155-2).